Reading from the N-terminus, the 167-residue chain is Shikimate kinase (167 aa).

An ATP-binding site is contributed by 8-15 (GFMGSGKT).

Belongs to the shikimate kinase family.

The protein localises to the cytoplasm. It carries out the reaction shikimate + ATP = 3-phosphoshikimate + ADP + H(+). The protein operates within metabolic intermediate biosynthesis; chorismate biosynthesis; chorismate from D-erythrose 4-phosphate and phosphoenolpyruvate: step 5/7. This is Shikimate kinase from Helicobacter hepaticus (strain ATCC 51449 / 3B1).